The sequence spans 74 residues: MKLTCVLIIAVLFLTAYQLATAASHAKGKQKHRALRPADKHFRFTKRCNNRGGGCSQHPHCCSGTCNKTFGVCL.

An N-terminal signal peptide occupies residues 1–22 (MKLTCVLIIAVLFLTAYQLATA). Positions 23 to 47 (ASHAKGKQKHRALRPADKHFRFTKR) are excised as a propeptide. Disulfide bonds link Cys-48–Cys-62, Cys-55–Cys-66, and Cys-61–Cys-73.

Expressed by the venom duct.

Its subcellular location is the secreted. In terms of biological role, when injected intracranially in mice, induces a series of symptoms such as quivering, climbing, scratching, barrel rolling and paralysis of limbs. Unexpectedly, no effect is observed on ionic currents when tested on locust DUM neuron. The polypeptide is Conotoxin VxVIA (Conus vexillum (Flag cone)).